The sequence spans 445 residues: Argininosuccinate synthase (445 aa).

Residues 17 to 25 (AFSGGLDTS) and Ala-43 each bind ATP. Tyr-99 provides a ligand contact to L-citrulline. The ATP site is built by Gly-129 and Thr-131. L-aspartate-binding residues include Thr-131, Asn-135, and Asp-136. Asn-135 contributes to the L-citrulline binding site. Asp-136 is an ATP binding site. 2 residues coordinate L-citrulline: Arg-139 and Ser-192. Residue Asp-194 participates in ATP binding. Residues Thr-201, Glu-203, and Glu-280 each coordinate L-citrulline.

This sequence belongs to the argininosuccinate synthase family. Type 2 subfamily. In terms of assembly, homotetramer.

Its subcellular location is the cytoplasm. It carries out the reaction L-citrulline + L-aspartate + ATP = 2-(N(omega)-L-arginino)succinate + AMP + diphosphate + H(+). It participates in amino-acid biosynthesis; L-arginine biosynthesis; L-arginine from L-ornithine and carbamoyl phosphate: step 2/3. This is Argininosuccinate synthase from Rhodopseudomonas palustris (strain BisB18).